The following is a 309-amino-acid chain: G-protein coupled receptor 35 (309 aa).

Topologically, residues 1–24 (MNGTYNTCGSSDLTWPPAIKLGFY) are extracellular. An N-linked (GlcNAc...) asparagine glycan is attached at Asn-2. The chain crosses the membrane as a helical span at residues 25-45 (AYLGVLLVLGLLLNSLALWVF). Over 46 to 56 (CCRMQQWTETR) the chain is Cytoplasmic. Residues 57–77 (IYMTNLAVADLCLLCTLPFVL) traverse the membrane as a helical segment. The Extracellular portion of the chain corresponds to 78–90 (HSLRDTSDTPLCQ). Cys-89 and Cys-162 are oxidised to a cystine. The helical transmembrane segment at 91–112 (LSQGIYLTNRYMSISLVTAIAV) threads the bilayer. Over 113–135 (DRYVAVRHPLRARGLRSPRQAAA) the chain is Cytoplasmic. The chain crosses the membrane as a helical span at residues 136-156 (VCAVLWVLVIGSLVARWLLGI). The Extracellular portion of the chain corresponds to 157 to 174 (QEGGFCFRSTRHNFNSMA). A helical membrane pass occupies residues 175 to 195 (FPLLGFYLPLAVVVFCSLKVV). Residues 196-218 (TALAQRPPTDVGQAEATRKAARM) lie on the Cytoplasmic side of the membrane. Residues 219 to 239 (VWANLLVFVVCFLPLHVGLTV) form a helical membrane-spanning segment. At 240 to 258 (RLAVGWNACALLETIRRAL) the chain is on the extracellular side. The helical transmembrane segment at 259-279 (YITSKLSDANCCLDAICYYYM) threads the bilayer. Residues 280–309 (AKEFQEASALAVAPSAKAHKSQDSLCVTLA) are Cytoplasmic-facing. Residues Ser-287 and Ser-294 each carry the phosphoserine modification. Phosphoserine; by GRK5 and GRK6 occurs at positions 300 and 303. Thr-307 carries the post-translational modification Phosphothreonine.

Belongs to the G-protein coupled receptor 1 family. In terms of assembly, interacts with GNA13. Interacts with ARRB2. Multiply phosphorylated in clusters of serines and threonines in the C-terminal tail. Phosphorylation of Ser-300 and Ser-303 is mediated by GRK5 and/or GRK6. As to expression, predominantly expressed in immune and gastrointestinal tissues.

It is found in the cell membrane. G-protein coupled receptor that binds to several ligands including the tryptophan metabolite kynurenic acid (KYNA), lysophosphatidic acid (LPA) or 5-hydroxyindoleacetic acid (5-HIAA) with high affinity, leading to rapid and transient activation of numerous intracellular signaling pathways. Plays a role in neutrophil recruitment to sites of inflammation and bacterial clearance through the major serotonin metabolite 5-HIAA that acts as a physiological ligand. Stimulates lipid metabolism, thermogenic, and anti-inflammatory gene expression in adipose tissue once activated by kynurenic acid. In macrophages, activation by lysophosphatidic acid promotes GPR35-induced signaling with a distinct transcriptional profile characterized by TNF production associated with ERK and NF-kappa-B activation. In turn, induces chemotaxis of macrophages. In Homo sapiens (Human), this protein is G-protein coupled receptor 35 (GPR35).